An 83-amino-acid polypeptide reads, in one-letter code: RNA-binding protein Hfq (83 aa).

Residues 9-68 (DPYLNALRKERIPVSIFLVNGIKLQGQIESFDQFVILLKNTVSQMVYKHAISTVVPARNV) enclose the Sm domain.

Belongs to the Hfq family. Homohexamer.

Functionally, RNA chaperone that binds small regulatory RNA (sRNAs) and mRNAs to facilitate mRNA translational regulation in response to envelope stress, environmental stress and changes in metabolite concentrations. Also binds with high specificity to tRNAs. The sequence is that of RNA-binding protein Hfq from Hahella chejuensis (strain KCTC 2396).